We begin with the raw amino-acid sequence, 339 residues long: Deubiquitinase and deneddylase Dub2 (339 aa).

A helical membrane pass occupies residues 36–56 (IIIALFLIVISCGLILCAYTF). Catalysis depends on residues H203, D220, and C282.

Belongs to the peptidase C48 family.

The protein resides in the secreted. It is found in the host cell. It localises to the membrane. In terms of biological role, effector proteins function to alter host cell physiology and promote bacterial survival in host tissues. This protease possesses deubiquitinating and deneddylating activities. This is Deubiquitinase and deneddylase Dub2 (cdu2) from Chlamydia trachomatis serovar A (strain ATCC VR-571B / DSM 19440 / HAR-13).